We begin with the raw amino-acid sequence, 1316 residues long: MLDVNFFDELRIGLATAEDIRQWSYGEVKKPETINYRTLKPEKDGLFCEKIFGPTRDWECYCGKYKRAPFKGIICERCGVEVTRAKVRRERMGHIELAAPVTHIWYFKGVPSRLGYLLDLAPKDLEKIIYFAAYVITSVDEEMRHNELSTLEAEMAVERKAVEDQRDGELEARAQKLEADLAELEAEGAKADARRKVRDGGEREMRQIRDRAQRELDRLEDIWSTFTKLAPKQLIVDENLYRELVDRYGEYFTGAMGAESIQKLIENFDIDAEAESLRDVIRNGKGQKKLRALKRLKVVAAFQQSGNSPMGMVLDAVPVIPPELRPMVQLDGGRFATSDLNDLYRRVINRNNRLKRLIDLGAPEIIVNNEKRMLQESVDALFDNGRRGRPVTGPGNRPLKSLSDLLKGKQGRFRQNLLGKRVDYSGRSVIVVGPQLKLHQCGLPKLMALELFKPFVMKRLVDLNHAQNIKSAKRMVERQRPQVWDVLEEVIAEHPVLLNRAPTLHRLGIQAFEPMLVEGKAIQLHPLVCEAFNADFDGDQMAVHLPLSAEAQAEARILMLSSNNILSPASGRPLAMPRLDMVTGLYYLTTEVPGDTGEYQPASGDHPETGVYSSPAEAIMAADRGVLSVRAKIKVRLTQLRPPVEIEAELFGHSGWQPGDAWMAETTLGRVMFNELLPLGYPFVNKQMHKKVQAAIINDLAERYPMIVVAQTVDKLKDAGFYWATRSGVTVSMADVLVPPRKKEILDHYEERADKVEKQFQRGALNHDERNEALVEIWKEATDEVGQALREHYPDDNPIITIVDSGATGNFTQTRTLAGMKGLVTNPKGEFIPRPVKSSFREGLTVLEYFINTHGARKGLADTALRTADSGYLTRRLVDVSQDVIVREHDCQTERGIVVELAERAPDGTLIRDPYIETSAYARTLGTDAVDEAGNVIVERGQDLGDPEIDALLAAGITQVKVRSVLTCATSTGVCATCYGRSMATGKLVDIGEAVGIVAAQSIGEPGTQLTMRTFHQGGVGEDITGGLPRVQELFEARVPRGKAPIADVTGRVRLEDGERFYKITIVPDDGGEEVVYDKISKRQRLRVFKHEDGSERVLSDGDHVEVGQQLMEGSADPHEVLRVQGPREVQIHLVREVQEVYRAQGVSIHDKHIEVIVRQMLRRVTIIDSGSTEFLPGSLIDRAEFEAENRRVVAEGGEPAAGRPVLMGITKASLATDSWLSAASFQETTRVLTDAAINCRSDKLNGLKENVIIGKLIPAGTGINRYRNIAVQPTEEARAAAYTIPSYEDQYYSPDFGAATGAAVPLDDYGYSDYR.

Zn(2+)-binding residues include cysteine 60, cysteine 62, cysteine 75, and cysteine 78. Residues aspartate 535, aspartate 537, and aspartate 539 each coordinate Mg(2+). The Zn(2+) site is built by cysteine 891, cysteine 968, cysteine 975, and cysteine 978.

This sequence belongs to the RNA polymerase beta' chain family. As to quaternary structure, the RNAP catalytic core consists of 2 alpha, 1 beta, 1 beta' and 1 omega subunit. When a sigma factor is associated with the core the holoenzyme is formed, which can initiate transcription. The cofactor is Mg(2+). Zn(2+) serves as cofactor.

It catalyses the reaction RNA(n) + a ribonucleoside 5'-triphosphate = RNA(n+1) + diphosphate. Functionally, DNA-dependent RNA polymerase catalyzes the transcription of DNA into RNA using the four ribonucleoside triphosphates as substrates. This Mycobacterium bovis (strain BCG / Tokyo 172 / ATCC 35737 / TMC 1019) protein is DNA-directed RNA polymerase subunit beta'.